A 366-amino-acid polypeptide reads, in one-letter code: tRNA/tmRNA (uracil-C(5))-methyltransferase (366 aa).

Positions 187, 215, 220, 236, and 297 each coordinate S-adenosyl-L-methionine. Cys-322 serves as the catalytic Nucleophile. Glu-356 functions as the Proton acceptor in the catalytic mechanism.

It belongs to the class I-like SAM-binding methyltransferase superfamily. RNA M5U methyltransferase family. TrmA subfamily.

The catalysed reaction is uridine(54) in tRNA + S-adenosyl-L-methionine = 5-methyluridine(54) in tRNA + S-adenosyl-L-homocysteine + H(+). It carries out the reaction uridine(341) in tmRNA + S-adenosyl-L-methionine = 5-methyluridine(341) in tmRNA + S-adenosyl-L-homocysteine + H(+). In terms of biological role, dual-specificity methyltransferase that catalyzes the formation of 5-methyluridine at position 54 (m5U54) in all tRNAs, and that of position 341 (m5U341) in tmRNA (transfer-mRNA). This chain is tRNA/tmRNA (uracil-C(5))-methyltransferase, found in Marinomonas sp. (strain MWYL1).